A 417-amino-acid polypeptide reads, in one-letter code: NADH-quinone oxidoreductase subunit D (417 aa).

The protein belongs to the complex I 49 kDa subunit family. As to quaternary structure, NDH-1 is composed of 14 different subunits. Subunits NuoB, C, D, E, F, and G constitute the peripheral sector of the complex.

It is found in the cell inner membrane. It catalyses the reaction a quinone + NADH + 5 H(+)(in) = a quinol + NAD(+) + 4 H(+)(out). Functionally, NDH-1 shuttles electrons from NADH, via FMN and iron-sulfur (Fe-S) centers, to quinones in the respiratory chain. The immediate electron acceptor for the enzyme in this species is believed to be ubiquinone. Couples the redox reaction to proton translocation (for every two electrons transferred, four hydrogen ions are translocated across the cytoplasmic membrane), and thus conserves the redox energy in a proton gradient. The polypeptide is NADH-quinone oxidoreductase subunit D (Nitrosococcus oceani (strain ATCC 19707 / BCRC 17464 / JCM 30415 / NCIMB 11848 / C-107)).